The primary structure comprises 905 residues: Cadherin-2B (905 aa).

The N-terminal stretch at 1 to 28 (MCRKQPFLLPTLLGILAALMLQQGPVEA) is a signal peptide. Positions 29-160 (FGGSRLCKTG…NSNGLQRQKR (132 aa)) are excised as a propeptide. Cadherin domains lie at 161–268 (DWVI…RPEF), 269–383 (LHQI…PPEF), 384–498 (TAMT…NPYF), 499–604 (TPNP…DNAP), and 605–713 (YVYP…TTAP). Residues 161–723 (DWVIPPINVP…IIGTGLGTGA (563 aa)) lie on the Extracellular side of the membrane. Position 171 (glutamate 171) interacts with Ca(2+). Asparagine 191 is a glycosylation site (N-linked (GlcNAc...) asparagine). Residues aspartate 227, glutamate 229, aspartate 260, methionine 261, asparagine 262, aspartate 263, and asparagine 264 each contribute to the Ca(2+) site. Asparagine 274 carries N-linked (GlcNAc...) asparagine glycosylation. Residues aspartate 294, aspartate 296, and asparagine 302 each coordinate Ca(2+). N-linked (GlcNAc...) asparagine glycosylation occurs at asparagine 326. Position 354 (aspartate 354) interacts with Ca(2+). Residues asparagine 403, asparagine 573, asparagine 623, asparagine 651, and asparagine 692 are each glycosylated (N-linked (GlcNAc...) asparagine). A helical transmembrane segment spans residues 724–745 (IIAILLCIIILLTLVLMFVVWM). Residues 746–905 (KRRDKERQAK…LADMYGGSDD (160 aa)) lie on the Cytoplasmic side of the membrane. Disordered regions lie at residues 774–800 (EEGG…PDTI) and 862–883 (SGST…EQDY). Acidic residues predominate over residues 775–784 (EGGGEEDQDY). Low complexity predominate over residues 862–879 (SGSTAGSLSSLNSSSSGG).

Homodimer (via extracellular region). Can also form heterodimers with other cadherins (via extracellular region). Dimerization occurs in trans, i.e. with a cadherin chain from another cell.

It is found in the cell membrane. The protein localises to the sarcolemma. Its subcellular location is the cell junction. The protein resides in the cell surface. It localises to the desmosome. It is found in the adherens junction. Calcium-dependent cell adhesion protein; preferentially mediates homotypic cell-cell adhesion. Cadherins may thus contribute to the sorting of heterogeneous cell types, and thereby play an important role during embryonic development. Required for proper neurite branching. Required for pre- and postsynaptic organization. The sequence is that of Cadherin-2B (cdh2-b) from Xenopus laevis (African clawed frog).